The following is a 380-amino-acid chain: Cytochrome b (380 aa).

Helical transmembrane passes span 33-53 (FGSL…FLAM), 77-98 (WLIR…FIHV), 113-133 (WNIG…GYVL), and 178-198 (FFAF…VHLL). Heme b-binding residues include histidine 83 and histidine 97. Heme b contacts are provided by histidine 182 and histidine 196. A ubiquinone is bound at residue histidine 201. The next 4 membrane-spanning stretches (helical) occupy residues 226–246 (IKDL…VLFF), 288–308 (LGGV…PFLN), 320–340 (ITQF…WIGG), and 347–367 (FTTI…VLMP).

This sequence belongs to the cytochrome b family. As to quaternary structure, the cytochrome bc1 complex contains 11 subunits: 3 respiratory subunits (MT-CYB, CYC1 and UQCRFS1), 2 core proteins (UQCRC1 and UQCRC2) and 6 low-molecular weight proteins (UQCRH/QCR6, UQCRB/QCR7, UQCRQ/QCR8, UQCR10/QCR9, UQCR11/QCR10 and a cleavage product of UQCRFS1). This cytochrome bc1 complex then forms a dimer. It depends on heme b as a cofactor.

Its subcellular location is the mitochondrion inner membrane. Its function is as follows. Component of the ubiquinol-cytochrome c reductase complex (complex III or cytochrome b-c1 complex) that is part of the mitochondrial respiratory chain. The b-c1 complex mediates electron transfer from ubiquinol to cytochrome c. Contributes to the generation of a proton gradient across the mitochondrial membrane that is then used for ATP synthesis. This Thomasomys ischyrus (Strong-tailed oldfield mouse) protein is Cytochrome b (MT-CYB).